The chain runs to 400 residues: MTQFASPVLHSLLDTDAYKLHMQQAVFHHYYDVQVAAEFRCRGDDLLGIYADAIREQVDAMQHLRLQEDEFQWLSGLPFFKPDYLNWLREFRYNPAQVCVTNDNGKLNIRLTGPWREVIMWEVPLLAVISELVHHYRSPNAGVDQALDALESKLVDFTALTANLDMSRFHLMDFGTRRRFSREVQQAIVKRLQQESWFVGTSNYDLARRLALTPMGTQAHEWFQAHQQISPDLATSQRAALAAWLNEYPDQLGIALTDCITMDAFLRDFGIEFASRYQGLRHDSGDPVAWGEKAIAHYEKLGIDPLTKTLVFSDNLDLQKAVELYRHFASRVQLSFGIGTRLTCDIPQVKPLNIVIKLVECNGKPVAKLSDSPGKTICHDKAFVRALRKAFDLPQVRKAS.

H220 carries the post-translational modification Phosphohistidine; by autocatalysis.

This sequence belongs to the NAPRTase family. In terms of processing, transiently phosphorylated on a His residue during the reaction cycle. Phosphorylation strongly increases the affinity for substrates and increases the rate of nicotinate D-ribonucleotide production. Dephosphorylation regenerates the low-affinity form of the enzyme, leading to product release.

It carries out the reaction nicotinate + 5-phospho-alpha-D-ribose 1-diphosphate + ATP + H2O = nicotinate beta-D-ribonucleotide + ADP + phosphate + diphosphate. It functions in the pathway cofactor biosynthesis; NAD(+) biosynthesis; nicotinate D-ribonucleotide from nicotinate: step 1/1. Catalyzes the synthesis of beta-nicotinate D-ribonucleotide from nicotinate and 5-phospho-D-ribose 1-phosphate at the expense of ATP. The sequence is that of Nicotinate phosphoribosyltransferase from Salmonella newport (strain SL254).